The primary structure comprises 480 residues: ATP synthase subunit beta 1 (480 aa).

ATP is bound at residue 154–161; that stretch reads GGAGVGKT.

It belongs to the ATPase alpha/beta chains family. As to quaternary structure, F-type ATPases have 2 components, CF(1) - the catalytic core - and CF(0) - the membrane proton channel. CF(1) has five subunits: alpha(3), beta(3), gamma(1), delta(1), epsilon(1). CF(0) has four main subunits: a(1), b(1), b'(1) and c(9-12).

Its subcellular location is the cell inner membrane. It catalyses the reaction ATP + H2O + 4 H(+)(in) = ADP + phosphate + 5 H(+)(out). Functionally, produces ATP from ADP in the presence of a proton gradient across the membrane. The catalytic sites are hosted primarily by the beta subunits. In Bradyrhizobium sp. (strain BTAi1 / ATCC BAA-1182), this protein is ATP synthase subunit beta 1.